Reading from the N-terminus, the 224-residue chain is Thylakoid lumenal 15 kDa protein 1, chloroplastic (224 aa).

The N-terminal 34 residues, 1 to 34 (MVILSNVSLFSCCNISQKPSLFSPSSRSSHCPIR), are a transit peptide targeting the chloroplast. The N-terminal 47 residues, 35–81 (CSQSQEGKEVVTSPLRSVVWSLGEEVSKRSLFALVSASLFFVDPALA), are a transit peptide targeting the thylakoid. 2 consecutive Pentapeptide repeat domains span residues 116–155 (SILRQANFKGAKLLGASFFDADLTGADLSEADLRGADFSL) and 156–196 (ANVT…PLRD).

It localises to the plastid. The protein localises to the chloroplast thylakoid lumen. This chain is Thylakoid lumenal 15 kDa protein 1, chloroplastic, found in Arabidopsis thaliana (Mouse-ear cress).